The chain runs to 298 residues: Inosose dehydratase (298 aa).

The protein belongs to the IolE/MocC family. It depends on glutathione as a cofactor. The cofactor is Co(2+). Mn(2+) serves as cofactor.

The catalysed reaction is scyllo-inosose = 3D-3,5/4-trihydroxycyclohexane-1,2-dione + H2O. Its pathway is polyol metabolism; myo-inositol degradation into acetyl-CoA; acetyl-CoA from myo-inositol: step 2/7. In terms of biological role, catalyzes the dehydration of inosose (2-keto-myo-inositol, 2KMI or 2,4,6/3,5-pentahydroxycyclohexanone) to 3D-(3,5/4)-trihydroxycyclohexane-1,2-dione (D-2,3-diketo-4-deoxy-epi-inositol). The chain is Inosose dehydratase from Bacillus thuringiensis (strain Al Hakam).